The chain runs to 495 residues: 2-carboxy-D-arabinitol-1-phosphatase (495 aa).

Positions 1–12 (MLLFAPTPPPSP) are enriched in pro residues. The segment at 1-23 (MLLFAPTPPPSPATAHRRPGGSA) is disordered. Residues 1–50 (MLLFAPTPPPSPATAHRRPGGSAASCIRCSSVRELDRSPSRPPLPPLAEA) constitute a chloroplast transit peptide. Catalysis depends on H58, which acts as the Tele-phosphohistidine intermediate. E132 serves as the catalytic Proton donor/acceptor.

This sequence belongs to the phosphoglycerate mutase family.

The protein resides in the plastid. It localises to the chloroplast stroma. The catalysed reaction is 2-carboxy-D-arabinitol 1-phosphate + H2O = 2-carboxy-D-arabinitol + phosphate. Its activity is regulated as follows. Inactivated by oxidized glutathione (GSSG) at pH 8.0. Functionally, phosphoglycerate mutase-like protein lacking PGM activity, but having 2-carboxy-D-arabinitol 1-phosphate (CA1P) phosphatase activity. Can dephosphorylate the closely related compounds 2-carboxy-D-arabinitol 1,5-bisphosphate (CABP) and 2-carboxy-D-ribitol-1,5-bisphosphate(CRBP), and 2,3-diphosphoglycerate. Prevents the accumulation of D-glycero-2,3-pentodiulose-1,5-bisphosphate (PDBP) a potent inhibitor of ribulose-1,5-bisphosphate carboxylase (RuBisCO). PDBP is produced during the oxidation of ribulose-1,5-bisphosphate, the substrate of RuBisCO. In Triticum aestivum (Wheat), this protein is 2-carboxy-D-arabinitol-1-phosphatase.